The sequence spans 517 residues: Retrotransposon-like protein 1 (517 aa).

Disordered stretches follow at residues 1-29 (MEVN…QQQL) and 142-161 (EEER…DARS).

The polypeptide is Retrotransposon-like protein 1 (retr-1) (Caenorhabditis elegans).